Consider the following 494-residue polypeptide: MTATAPVKTEYEAVIGLETHVQLGTATKIFSNASTEFGADPNTHIDPVVLGLPGTLPVLNQKVLEYAVKAGLALNCQIAPYSKFDRKQYFYPDLPKNYQISQYDLPIAEHGWIEIEVAEKGKEPYTKKIGVTRLHMEEDAGKLVHAGSDRLAGSTHSLVDYNRAGVALAEIVSEPDLRTGKEAAEYAQELRRIMRYLGVSDGNMAEGSLRCDVNISIRPKGTEKFGTKVEIKYMNSFNAIQRAIEFEIERQIRCLETGEPIVQETRLWDEGKQVTKSMRSKEGSSDYRYFPEPDLGPIEVSETQRETWRSELPELPAQKRHRYAEQYGLSAYDARVLTDEKSTADYYEATVAAGADAKQAANWLMGDIAAYVNANKLLVSDLPLQPQDLAELVNLIEAGTISGKIAKEILPELLEKGGSPKAIVEAKGLTQISDPAQIEALVDELLAAHPTELEQFRAGKTKLQGFFVGQLMKKTGGRVDPKLSNQILNQKLKG.

The protein belongs to the GatB/GatE family. GatB subfamily. As to quaternary structure, heterotrimer of A, B and C subunits.

It carries out the reaction L-glutamyl-tRNA(Gln) + L-glutamine + ATP + H2O = L-glutaminyl-tRNA(Gln) + L-glutamate + ADP + phosphate + H(+). It catalyses the reaction L-aspartyl-tRNA(Asn) + L-glutamine + ATP + H2O = L-asparaginyl-tRNA(Asn) + L-glutamate + ADP + phosphate + 2 H(+). Its function is as follows. Allows the formation of correctly charged Asn-tRNA(Asn) or Gln-tRNA(Gln) through the transamidation of misacylated Asp-tRNA(Asn) or Glu-tRNA(Gln) in organisms which lack either or both of asparaginyl-tRNA or glutaminyl-tRNA synthetases. The reaction takes place in the presence of glutamine and ATP through an activated phospho-Asp-tRNA(Asn) or phospho-Glu-tRNA(Gln). The chain is Aspartyl/glutamyl-tRNA(Asn/Gln) amidotransferase subunit B from Synechococcus sp. (strain ATCC 27144 / PCC 6301 / SAUG 1402/1) (Anacystis nidulans).